The sequence spans 438 residues: Exodeoxyribonuclease 7 large subunit (438 aa).

The tract at residues 406–438 is disordered; the sequence is ATSTGPTDDIPSSAARLPASPAPDARPASGPES.

Belongs to the XseA family. Heterooligomer composed of large and small subunits.

Its subcellular location is the cytoplasm. The enzyme catalyses Exonucleolytic cleavage in either 5'- to 3'- or 3'- to 5'-direction to yield nucleoside 5'-phosphates.. In terms of biological role, bidirectionally degrades single-stranded DNA into large acid-insoluble oligonucleotides, which are then degraded further into small acid-soluble oligonucleotides. This is Exodeoxyribonuclease 7 large subunit from Clavibacter sepedonicus (Clavibacter michiganensis subsp. sepedonicus).